The following is a 115-amino-acid chain: Insulin-like peptide IlO1_i1 (115 aa).

Residues 1 to 20 (MFVYTTIMLLLLAEINHSQG) form the signal peptide. 3 disulfides stabilise this stretch: Cys-40-Cys-101, Cys-52-Cys-114, and Cys-100-Cys-105. A propeptide spans 59–93 (RRNRITGLDQRSIFESNLLAKRFLISRRQIVNNRR) (c peptide).

The protein belongs to the insulin family. In terms of tissue distribution, expressed in tentacles.

It localises to the secreted. Its function is as follows. Heterodimer with unknown function. Surprisingly, the truncated synthetic analog (dimer of 27-58 and 94-115) does not bind to long insulin receptor (HIR-B) and insulin-like growth factor 1 receptor. This truncated synthetic analog shows very weak inhibitory activity on different voltage-gated channels. The polypeptide is Insulin-like peptide IlO1_i1 (Oulactis sp. (Sea anemone)).